A 327-amino-acid polypeptide reads, in one-letter code: Serpentine receptor class alpha-33 (327 aa).

6 helical membrane passes run 20–40 (FSVY…VLAI), 56–76 (LLIT…FLQN), 133–153 (FSHA…STVF), 186–206 (IIPY…LIIY), 227–247 (AVVS…LFCF), and 270–290 (IIGW…AVFL).

This sequence belongs to the nematode receptor-like protein sra family.

Its subcellular location is the membrane. This Caenorhabditis elegans protein is Serpentine receptor class alpha-33 (sra-33).